We begin with the raw amino-acid sequence, 101 residues long: Large ribosomal subunit protein uL23 (101 aa).

Belongs to the universal ribosomal protein uL23 family. In terms of assembly, part of the 50S ribosomal subunit. Contacts protein L29, and trigger factor when it is bound to the ribosome.

Functionally, one of the early assembly proteins it binds 23S rRNA. One of the proteins that surrounds the polypeptide exit tunnel on the outside of the ribosome. Forms the main docking site for trigger factor binding to the ribosome. In Corynebacterium jeikeium (strain K411), this protein is Large ribosomal subunit protein uL23.